Here is a 1182-residue protein sequence, read N- to C-terminus: DNA-directed RNA polymerase subunit beta' (1182 aa).

Zn(2+) is bound by residues cysteine 59, cysteine 61, cysteine 74, and cysteine 77. Mg(2+)-binding residues include aspartate 449, aspartate 451, and aspartate 453. Zn(2+) is bound by residues cysteine 794, cysteine 868, cysteine 875, and cysteine 878.

Belongs to the RNA polymerase beta' chain family. In terms of assembly, the RNAP catalytic core consists of 2 alpha, 1 beta, 1 beta' and 1 omega subunit. When a sigma factor is associated with the core the holoenzyme is formed, which can initiate transcription. The cofactor is Mg(2+). Requires Zn(2+) as cofactor.

It catalyses the reaction RNA(n) + a ribonucleoside 5'-triphosphate = RNA(n+1) + diphosphate. DNA-dependent RNA polymerase catalyzes the transcription of DNA into RNA using the four ribonucleoside triphosphates as substrates. The chain is DNA-directed RNA polymerase subunit beta' from Clostridium acetobutylicum (strain ATCC 824 / DSM 792 / JCM 1419 / IAM 19013 / LMG 5710 / NBRC 13948 / NRRL B-527 / VKM B-1787 / 2291 / W).